The chain runs to 179 residues: Large ribosomal subunit protein uL6 (179 aa).

Belongs to the universal ribosomal protein uL6 family. As to quaternary structure, part of the 50S ribosomal subunit.

In terms of biological role, this protein binds to the 23S rRNA, and is important in its secondary structure. It is located near the subunit interface in the base of the L7/L12 stalk, and near the tRNA binding site of the peptidyltransferase center. This is Large ribosomal subunit protein uL6 from Rippkaea orientalis (strain PCC 8801 / RF-1) (Cyanothece sp. (strain PCC 8801)).